The chain runs to 607 residues: MSRIAILPSAVADQIAAGEVVERPASVVKELVENALDAGATSVDITIEDGGRTLIRIADNGSGMDGADAVLALSRHATSKITSAEQLVGVRSFGFRGEALPAIASVSELQIETASEDGSGTLVRVQAGTLTETGQVARRQGTTVSVHRLFHNTPARLKFMRSARSEWRAIVDAMQAIGVLRRDVHFTVRHDGRVALDWPAVSTLRARLAALWGAADVERFVDVDDVQGVVHVSGLAERPADVGTATRRVLLIVNGRVVRDHGLIRAAEAAYRSTIPAGMRPSLVLQVHVPGGDVDVNVHPAKAEVRFRDRWPLERAVEEAVRRALGLFDASAGIGWRTWSAAPASREPGHALGGIPLEPSALRAAPAPEGLFATPAAADANLAQHAIATATAPTADDLTSAMQVDAMRAEAAREMETLVVPPLMQLRKTYLMFEHDEGVVLIDQHSAHERVLYEQFLGVLERGEAPSQRLLFPLTLHLGPQEADAFEAHRDAFVRLGFEIDHFGGTSLLVQAVPMPHPRFDAERCLRDTLAALIGDRGASAAAKHERLAATFACKAAIKAGDQMSPGEMQALYRALAATVLPAHDVHGRSTIVRLSWDELDRRFGRK.

Belongs to the DNA mismatch repair MutL/HexB family.

In terms of biological role, this protein is involved in the repair of mismatches in DNA. It is required for dam-dependent methyl-directed DNA mismatch repair. May act as a 'molecular matchmaker', a protein that promotes the formation of a stable complex between two or more DNA-binding proteins in an ATP-dependent manner without itself being part of a final effector complex. The chain is DNA mismatch repair protein MutL from Gemmatimonas aurantiaca (strain DSM 14586 / JCM 11422 / NBRC 100505 / T-27).